The sequence spans 142 residues: Large ribosomal subunit protein uL13 (142 aa).

It belongs to the universal ribosomal protein uL13 family. Part of the 50S ribosomal subunit.

Its function is as follows. This protein is one of the early assembly proteins of the 50S ribosomal subunit, although it is not seen to bind rRNA by itself. It is important during the early stages of 50S assembly. This chain is Large ribosomal subunit protein uL13, found in Burkholderia mallei (strain NCTC 10247).